The primary structure comprises 113 residues: Integration host factor subunit alpha (113 aa).

2 disordered regions span residues 59–80 (GNFQ…GETI) and 94–113 (QKLK…ASAE). A compositionally biased stretch (pro residues) spans 104 to 113 (NSPPDPASAE).

This sequence belongs to the bacterial histone-like protein family. Heterodimer of an alpha and a beta chain.

In terms of biological role, this protein is one of the two subunits of integration host factor, a specific DNA-binding protein that functions in genetic recombination as well as in transcriptional and translational control. The protein is Integration host factor subunit alpha of Bordetella pertussis (strain Tohama I / ATCC BAA-589 / NCTC 13251).